The following is a 197-amino-acid chain: ATP-dependent Clp protease proteolytic subunit 1 (197 aa).

Catalysis depends on Ser88, which acts as the Nucleophile. His113 is an active-site residue.

This sequence belongs to the peptidase S14 family. As to quaternary structure, fourteen ClpP subunits assemble into 2 heptameric rings which stack back to back to give a disk-like structure with a central cavity, resembling the structure of eukaryotic proteasomes.

The protein localises to the cytoplasm. The enzyme catalyses Hydrolysis of proteins to small peptides in the presence of ATP and magnesium. alpha-casein is the usual test substrate. In the absence of ATP, only oligopeptides shorter than five residues are hydrolyzed (such as succinyl-Leu-Tyr-|-NHMec, and Leu-Tyr-Leu-|-Tyr-Trp, in which cleavage of the -Tyr-|-Leu- and -Tyr-|-Trp bonds also occurs).. Cleaves peptides in various proteins in a process that requires ATP hydrolysis. Has a chymotrypsin-like activity. Plays a major role in the degradation of misfolded proteins. This chain is ATP-dependent Clp protease proteolytic subunit 1, found in Leifsonia xyli subsp. xyli (strain CTCB07).